A 468-amino-acid polypeptide reads, in one-letter code: Nuclear receptor ROR-alpha A (468 aa).

Positions 15 to 90 form a DNA-binding region, nuclear receptor; sequence IIPCKICGDK…VGMSRDAVKF (76 aa). 2 NR C4-type zinc fingers span residues 18 to 38 and 54 to 73; these read CKICGDKSSGIHYGVITCEGC and CPRQKNCLIDRTSRNRCQHC. 2 disordered regions span residues 101–129 and 142–163; these read LYAEVQKHRLQQQQRDHQQQPGEAEPLTP and HDDLSGYMNGHTPDGTKPDSGV. The NR LBD domain maps to 217–455; that stretch reads ELEHLAQNIS…AHFPPLYKEL (239 aa). An AF-2 region spans residues 444-455; sequence VRAHFPPLYKEL.

It belongs to the nuclear hormone receptor family. NR1 subfamily. In terms of tissue distribution, expressed in the brain, in cerebellar-like structures, including Purkinje cells.

It is found in the nucleus. Nuclear receptor that binds DNA as a monomer to ROR response elements (RORE). Required for proper cerebellum development. The protein is Nuclear receptor ROR-alpha A (roraa) of Danio rerio (Zebrafish).